Here is a 306-residue protein sequence, read N- to C-terminus: Ribosomal protein L11 methyltransferase (306 aa).

Threonine 154, glycine 179, aspartate 201, and asparagine 242 together coordinate S-adenosyl-L-methionine.

The protein belongs to the methyltransferase superfamily. PrmA family.

The protein resides in the cytoplasm. It catalyses the reaction L-lysyl-[protein] + 3 S-adenosyl-L-methionine = N(6),N(6),N(6)-trimethyl-L-lysyl-[protein] + 3 S-adenosyl-L-homocysteine + 3 H(+). Methylates ribosomal protein L11. The chain is Ribosomal protein L11 methyltransferase from Xanthomonas euvesicatoria pv. vesicatoria (strain 85-10) (Xanthomonas campestris pv. vesicatoria).